A 75-amino-acid chain; its full sequence is Small ribosomal subunit protein bS18 (75 aa).

It belongs to the bacterial ribosomal protein bS18 family. Part of the 30S ribosomal subunit. Forms a tight heterodimer with protein bS6.

Functionally, binds as a heterodimer with protein bS6 to the central domain of the 16S rRNA, where it helps stabilize the platform of the 30S subunit. The sequence is that of Small ribosomal subunit protein bS18 from Shewanella loihica (strain ATCC BAA-1088 / PV-4).